A 320-amino-acid chain; its full sequence is Cytochrome f (320 aa).

The N-terminal stretch at 1–35 is a signal peptide; it reads MQTRNNFSWIKEQITRSISVSLMIYIITRASISNA. The heme site is built by tyrosine 36, cysteine 56, cysteine 59, and histidine 60. Residues 286-306 form a helical membrane-spanning segment; it reads VQGLLFFLASVILAQIFLVLK.

Belongs to the cytochrome f family. In terms of assembly, the 4 large subunits of the cytochrome b6-f complex are cytochrome b6, subunit IV (17 kDa polypeptide, petD), cytochrome f and the Rieske protein, while the 4 small subunits are PetG, PetL, PetM and PetN. The complex functions as a dimer. Requires heme as cofactor.

It localises to the plastid. It is found in the chloroplast thylakoid membrane. Component of the cytochrome b6-f complex, which mediates electron transfer between photosystem II (PSII) and photosystem I (PSI), cyclic electron flow around PSI, and state transitions. This Lactuca sativa (Garden lettuce) protein is Cytochrome f.